The sequence spans 259 residues: Protein GrpE (259 aa).

Disordered stretches follow at residues 1 to 75 (MNSD…KGSD) and 227 to 259 (GPGP…KDEN). Residues 20–40 (NNPSENFVSSSNSNESVNQVE) show a composition bias toward low complexity. Over residues 46-60 (EVEHQVKNDSVDTAK) the composition is skewed to basic and acidic residues. A compositionally biased stretch (polar residues) spans 61–73 (EQSSTSCESNIKG).

It belongs to the GrpE family. As to quaternary structure, homodimer.

The protein localises to the cytoplasm. Functionally, participates actively in the response to hyperosmotic and heat shock by preventing the aggregation of stress-denatured proteins, in association with DnaK and GrpE. It is the nucleotide exchange factor for DnaK and may function as a thermosensor. Unfolded proteins bind initially to DnaJ; upon interaction with the DnaJ-bound protein, DnaK hydrolyzes its bound ATP, resulting in the formation of a stable complex. GrpE releases ADP from DnaK; ATP binding to DnaK triggers the release of the substrate protein, thus completing the reaction cycle. Several rounds of ATP-dependent interactions between DnaJ, DnaK and GrpE are required for fully efficient folding. This chain is Protein GrpE, found in Prochlorococcus marinus (strain NATL1A).